A 98-amino-acid polypeptide reads, in one-letter code: NADH-ubiquinone oxidoreductase chain 4L (98 aa).

The next 3 helical transmembrane spans lie at 1–21 (MSLV…GLLM), 30–50 (LLCL…TILT), and 61–81 (IVLL…LVMV).

The protein belongs to the complex I subunit 4L family. As to quaternary structure, core subunit of respiratory chain NADH dehydrogenase (Complex I) which is composed of 45 different subunits.

It localises to the mitochondrion inner membrane. The enzyme catalyses a ubiquinone + NADH + 5 H(+)(in) = a ubiquinol + NAD(+) + 4 H(+)(out). Its function is as follows. Core subunit of the mitochondrial membrane respiratory chain NADH dehydrogenase (Complex I) which catalyzes electron transfer from NADH through the respiratory chain, using ubiquinone as an electron acceptor. Part of the enzyme membrane arm which is embedded in the lipid bilayer and involved in proton translocation. The protein is NADH-ubiquinone oxidoreductase chain 4L (MT-ND4L) of Crocidura russula (Greater white-toothed shrew).